The primary structure comprises 133 residues: Small ribosomal subunit protein uS8 (133 aa).

The protein belongs to the universal ribosomal protein uS8 family. Part of the 30S ribosomal subunit. Contacts proteins S5 and S12.

In terms of biological role, one of the primary rRNA binding proteins, it binds directly to 16S rRNA central domain where it helps coordinate assembly of the platform of the 30S subunit. This chain is Small ribosomal subunit protein uS8, found in Leptospira borgpetersenii serovar Hardjo-bovis (strain JB197).